The sequence spans 880 residues: Tyrosine-protein kinase receptor TYRO3 (880 aa).

The first 28 residues, 1-28 (MVYPGPPGLIAGLLLAALSLSCVDGAKA), serve as a signal peptide directing secretion. 2 consecutive Ig-like C2-type domains span residues 29–114 (LGFV…KSVS) and 125–206 (PYFT…AIVE). Residues 29–414 (LGFVGHGYNL…QRHPHTRMSW (386 aa)) lie on the Extracellular side of the membrane. 2 N-linked (GlcNAc...) asparagine glycosylation sites follow: Asn37 and Asn49. Cys50 and Cys103 form a disulfide bridge. Asn143 is a glycosylation site (N-linked (GlcNAc...) asparagine). A disulfide bond links Cys146 and Cys189. Fibronectin type-III domains follow at residues 213 to 306 (PPFN…TKET) and 311 to 401 (LPQN…SKEE). Residues Asn216, Asn279, Asn351, and Asn365 are each glycosylated (N-linked (GlcNAc...) asparagine). A helical transmembrane segment spans residues 415 to 435 (VPMVLGILTALVTVVAMTLIF). The Cytoplasmic segment spans residues 436-880 (LRKGRKETRF…MQEEQVVITL (445 aa)). The Protein kinase domain occupies 503–774 (FTLGRTLGKG…VDLKQRLEAI (272 aa)). Residues 509-517 (LGKGEFGSV) and Lys535 each bind ATP. The active-site Proton acceptor is Asp640. A Phosphotyrosine; by autocatalysis modification is found at Tyr671. The tract at residues 846–880 (EWSSSAQNGEARGLLHEEEEEEEEEMQEEQVVITL) is disordered. The segment covering 862–873 (EEEEEEEEEMQE) has biased composition (acidic residues).

Belongs to the protein kinase superfamily. Tyr protein kinase family. AXL/UFO subfamily. Tyrosine phosphorylated upon receptor stimulation. Detected in brain, spinal cord, intestine, lung, stomach, ovary, testis, skin and eye.

Its subcellular location is the cell membrane. The catalysed reaction is L-tyrosyl-[protein] + ATP = O-phospho-L-tyrosyl-[protein] + ADP + H(+). In terms of biological role, may be involved in cell adhesion processes, particularly in the central nervous system. This is Tyrosine-protein kinase receptor TYRO3 (tyro3) from Xenopus laevis (African clawed frog).